Here is a 393-residue protein sequence, read N- to C-terminus: Nucleosome assembly protein 1-like 1-B (393 aa).

The span at 1 to 10 shows a compositional bias: basic and acidic residues; sequence MANIDNKEQT. Residues 1-38 are disordered; the sequence is MANIDNKEQTELDQQDMEDVEDVEEEETGEEANSKARQ. The segment covering 11–30 has biased composition (acidic residues); the sequence is ELDQQDMEDVEDVEEEETGE. The NAP1L motif motif lies at 126–151; that stretch reads YEPTEEECEWKVDEEEDIAEDLKEKA. Positions 274 to 280 match the Nuclear localization signal motif; sequence IKKKQKH. Acidic residues predominate over residues 347 to 377; it reads AIEDDDDDYDEEGEEADDEEGEEEADEDHDP. The tract at residues 347-393 is disordered; that stretch reads AIEDDDDDYDEEGEEADDEEGEEEADEDHDPDFDPKKAQNPAECKQQ.

The protein belongs to the nucleosome assembly protein (NAP) family. As to quaternary structure, forms homomultimers. Interacts with histone b4. Interacts with the B-type cyclins ccnb1 and ccnb2. Phosphorylated by cyclin B-cdc2 kinase complexes.

The protein resides in the cytoplasm. Its subcellular location is the nucleus. Functionally, acts as a chaperone for the linker histone to facilitate deposition of histone B4 onto linker DNA. Required for both remodeling of sperm chromatin into nucleosomes, and linker histone binding to nucleosome core dimers. Plays a role in tissue-specific gene regulation. Required for primitive hemopoiesis, acting upstream of tal1/scl. This is Nucleosome assembly protein 1-like 1-B (nap1l1-b) from Xenopus laevis (African clawed frog).